We begin with the raw amino-acid sequence, 233 residues long: MAKVSKRLAALKATVDRNKLYPVDEAISLVKGAATAKFDESIDVAVNLGVDPRKSDQVVRGSVVLPRGTGKSVRVAVFTQGANAEAAKAAGADIVGFEDLADEVKKGNLNFDVVIASPDAMRIVGQLGQILGPRGLMPNPKVGTVTPNVAEAVKNAKAGQVQYRTDKSGIIHATIGRASFDVEALRENLGALVDALQKAKPAASKGVYLKKIAVSSTMGVGVRVDQVTLVAQA.

It belongs to the universal ribosomal protein uL1 family. Part of the 50S ribosomal subunit.

In terms of biological role, binds directly to 23S rRNA. The L1 stalk is quite mobile in the ribosome, and is involved in E site tRNA release. Its function is as follows. Protein L1 is also a translational repressor protein, it controls the translation of the L11 operon by binding to its mRNA. This Laribacter hongkongensis (strain HLHK9) protein is Large ribosomal subunit protein uL1.